Here is a 967-residue protein sequence, read N- to C-terminus: Translation initiation factor IF-2 (967 aa).

Disordered regions lie at residues 201–320 (KPIV…PGFV) and 349–382 (LQGK…ELEA). Residues 233 to 248 (TGPTFSGQTIDLSQFN) show a composition bias toward polar residues. Over residues 256–272 (PNKGGAKPAGAGNNNNN) the composition is skewed to low complexity. The segment covering 354 to 363 (NKSKAAKYRR) has biased composition (basic residues). The span at 364-382 (DKRDTHRQKSDDEQRELEA) shows a compositional bias: basic and acidic residues. Residues 465 to 635 (HRAPIVTVMG…LLEAEVLDLK (171 aa)) enclose the tr-type G domain. A G1 region spans residues 474–481 (GHVDHGKT). 474-481 (GHVDHGKT) is a GTP binding site. The segment at 499–503 (GITQH) is G2. The G3 stretch occupies residues 521–524 (DTPG). Residues 521–525 (DTPGH) and 575–578 (NKVD) each bind GTP. The interval 575–578 (NKVD) is G4. Residues 611–613 (SAK) are G5.

This sequence belongs to the TRAFAC class translation factor GTPase superfamily. Classic translation factor GTPase family. IF-2 subfamily.

Its subcellular location is the cytoplasm. Its function is as follows. One of the essential components for the initiation of protein synthesis. Protects formylmethionyl-tRNA from spontaneous hydrolysis and promotes its binding to the 30S ribosomal subunits. Also involved in the hydrolysis of GTP during the formation of the 70S ribosomal complex. This chain is Translation initiation factor IF-2, found in Flavobacterium psychrophilum (strain ATCC 49511 / DSM 21280 / CIP 103535 / JIP02/86).